The sequence spans 282 residues: Probable iron transport system membrane protein HI_0360 (282 aa).

The next 8 membrane-spanning stretches (helical) occupy residues 17–37 (AMIL…YLML), 63–83 (LPYA…ILWI), 93–113 (AVIG…VSLN), 140–160 (IIIG…LLIF), 164–184 (TQAI…FTLL), 186–206 (ACVV…MVVT), 223–243 (IIAI…SYYL), and 245–265 (GATG…AFLF).

This sequence belongs to the ABC-3 integral membrane protein family.

It localises to the cell inner membrane. In terms of biological role, part of an ATP-driven transport system HI_0359/HI_0360/HI_0361/HI_0362 for iron. The protein is Probable iron transport system membrane protein HI_0360 of Haemophilus influenzae (strain ATCC 51907 / DSM 11121 / KW20 / Rd).